Consider the following 122-residue polypeptide: Large ribosomal subunit protein bL19 (122 aa).

Belongs to the bacterial ribosomal protein bL19 family.

Its function is as follows. This protein is located at the 30S-50S ribosomal subunit interface and may play a role in the structure and function of the aminoacyl-tRNA binding site. The protein is Large ribosomal subunit protein bL19 of Chlamydia abortus (strain DSM 27085 / S26/3) (Chlamydophila abortus).